The primary structure comprises 86 residues: DNA-directed RNA polymerase subunit omega (86 aa).

The protein belongs to the RNA polymerase subunit omega family. In terms of assembly, the RNAP catalytic core consists of 2 alpha, 1 beta, 1 beta' and 1 omega subunit. When a sigma factor is associated with the core the holoenzyme is formed, which can initiate transcription.

It carries out the reaction RNA(n) + a ribonucleoside 5'-triphosphate = RNA(n+1) + diphosphate. In terms of biological role, promotes RNA polymerase assembly. Latches the N- and C-terminal regions of the beta' subunit thereby facilitating its interaction with the beta and alpha subunits. This is DNA-directed RNA polymerase subunit omega from Psychrobacter arcticus (strain DSM 17307 / VKM B-2377 / 273-4).